We begin with the raw amino-acid sequence, 338 residues long: Lipoate-protein ligase A (338 aa).

A BPL/LPL catalytic domain is found at Ser-29 to Val-216. ATP-binding positions include Arg-71, Gly-76–Phe-79, and Lys-134. Lys-134 is a (R)-lipoate binding site.

This sequence belongs to the LplA family. As to quaternary structure, monomer.

It localises to the cytoplasm. It catalyses the reaction L-lysyl-[lipoyl-carrier protein] + (R)-lipoate + ATP = N(6)-[(R)-lipoyl]-L-lysyl-[lipoyl-carrier protein] + AMP + diphosphate + H(+). It participates in protein modification; protein lipoylation via exogenous pathway; protein N(6)-(lipoyl)lysine from lipoate: step 1/2. The protein operates within protein modification; protein lipoylation via exogenous pathway; protein N(6)-(lipoyl)lysine from lipoate: step 2/2. Catalyzes both the ATP-dependent activation of exogenously supplied lipoate to lipoyl-AMP and the transfer of the activated lipoyl onto the lipoyl domains of lipoate-dependent enzymes. This is Lipoate-protein ligase A from Yersinia enterocolitica serotype O:8 / biotype 1B (strain NCTC 13174 / 8081).